Consider the following 464-residue polypeptide: Lysosomal proton-coupled steroid conjugate and bile acid symporter SLC46A3 (464 aa).

Positions 1 to 26 are cleaved as a signal peptide; the sequence is MRKVLLVEPVIFIYIFASSLTSPVVQ. Residues 27–71 lie on the Extracellular side of the membrane; the sequence is QFIYRKLWEEEYNSTAISSDNSSHCERNKSSPTYVMEKAIQEKTS. Residues Asn-39, Asn-47, and Asn-54 are each glycosylated (N-linked (GlcNAc...) asparagine). Residues 72–92 traverse the membrane as a helical segment; the sequence is FFNMQLDLTGAVPSLIVAFII. At 93 to 104 the chain is on the cytoplasmic side; sequence VANGDHQGRKKS. A helical membrane pass occupies residues 105 to 125; sequence LVLPSIGALIADIFLTIVSYF. The Extracellular segment spans residues 126 to 130; it reads SWPTS. A helical membrane pass occupies residues 131–151; sequence VLFLATFISGLFGSMATFLGG. Over 152 to 171 the chain is Cytoplasmic; it reads GFAYIADQCHDEKQKTTRIA. Residues 172–192 form a helical membrane-spanning segment; that stretch reads VIDLIFGVVSGLAGLSSGYFL. The Extracellular segment spans residues 193-198; it reads REMGFT. The helical transmembrane segment at 199-219 threads the bilayer; it reads WTFATASLLHVVNIIYITFFL. At 220–259 the chain is on the cytoplasmic side; the sequence is QDTVHISEFQQQAPLSYKEHLKETFSGVYMLFKTAPSKKR. Residues 260 to 280 traverse the membrane as a helical segment; the sequence is ILIIVLLFIFMTYLFTMFGGS. The Extracellular portion of the chain corresponds to 281–296; the sequence is SLFTLYELDEPLCWTE. Residues 297–317 traverse the membrane as a helical segment; that stretch reads VYIGYGAAAFTSISLTSFLGV. Topologically, residues 318-326 are cytoplasmic; that stretch reads YLFSKCLKD. Residues 327–347 form a helical membrane-spanning segment; sequence IYIVFIGIFSYIGGIVMAAFA. The Extracellular segment spans residues 348–349; that stretch reads KT. The chain crosses the membrane as a helical span at residues 350–370; sequence TLLMFLVRVPSLFSIMPIPVL. At 371–384 the chain is on the cytoplasmic side; the sequence is RSMLSKVVLPSEQG. A helical membrane pass occupies residues 385-405; the sequence is AVFACIACLEVLTGTISLSVF. Residues 406–418 lie on the Extracellular side of the membrane; it reads NVIYAATVAWFSG. Residues 419-439 traverse the membrane as a helical segment; sequence FSFLLSASLCLIPLGVLCWLL. The Cytoplasmic portion of the chain corresponds to 440–464; it reads CTSWNGEDLALLVPEEVSSIDSVDS.

This sequence belongs to the major facilitator superfamily. SLC46A family.

Its subcellular location is the lysosome membrane. The enzyme catalyses estrone 3-sulfate(out) + n H(+)(out) = estrone 3-sulfate(in) + n H(+)(in). It catalyses the reaction 25-hydroxyvitamin D3 sulfate(out) + n H(+)(out) = 25-hydroxyvitamin D3 sulfate(in) + n H(+)(in). The catalysed reaction is cholate(out) + n H(+)(out) = cholate(in) + n H(+)(in). It carries out the reaction glycocholate(out) + n H(+)(out) = glycocholate(in) + n H(+)(in). The enzyme catalyses taurocholate(out) + n H(+)(out) = taurocholate(in) + n H(+)(in). It catalyses the reaction dehydroepiandrosterone 3-sulfate(out) + n H(+)(out) = dehydroepiandrosterone 3-sulfate(in) + n H(+)(in). Functionally, lysosomal proton-coupled steroid conjugate and bile acid transporter. Preferentially recognizes lipophilic steroid conjugates or bile acis as endogenous substrates and seems to mediate escape from lysosomes to the cytoplasm. Modulates hepatic cytosolic copper homeostasis, maybe acting as a lysosomal copper transporter and sequestering copper ions in the lysosome. The sequence is that of Lysosomal proton-coupled steroid conjugate and bile acid symporter SLC46A3 (SLC46A3) from Gallus gallus (Chicken).